We begin with the raw amino-acid sequence, 445 residues long: Zinc finger protein SHOOT GRAVITROPISM 5 (445 aa).

Residues 22-31 show a composition bias toward low complexity; sequence SSSDPFLSSS. The disordered stretch occupies residues 22-59; sequence SSSDPFLSSSENGVTTTNTSTQKRKRRPAGTPDPDAEV. A compositionally biased stretch (polar residues) spans 32–42; the sequence is ENGVTTTNTST. 3 consecutive C2H2-type zinc fingers follow at residues 73–95, 115–145, and 151–178; these read YICE…RRRH, YVCP…RRKH, and WVCE…TRGH. Residues C153, C156, H169, C173, C180, C182, H195, and C199 each coordinate Zn(2+). The segment at 178–201 adopts a CCHC-type 2; atypical zinc-finger fold; the sequence is HSCDCGRVFSRVESFIEHQDNCSA. The segment at 188 to 200 is SHR-binding; that stretch reads RVESFIEHQDNCS. 2 disordered regions span residues 203–253 and 281–314; these read RVHR…LEGR and SSNQ…LNLS. Polar residues predominate over residues 214–248; it reads TAVTVPACSSRTASTVSTPSSETNYGGTVAVTTPQ. Low complexity predominate over residues 281–293; sequence SSNQNPNQENQQQ. Residues 340–397 are a coiled coil; it reads MKIAMKEKAYAEEAKREAKRQREIAENEFANAKKIRQKAQAELERAKFLKEQSMKKIS.

Mainly expressed in the endodermis, the gravity-sensing tissue in inflorescence stems. Mostly present in stems and flowers, and, to a lower extent, in seedlings, hypocotyls, roots and the shoot apical meristem (SAM).

It is found in the nucleus. In terms of biological role, transcription factor involved in inflorescence stems gravitropism, probably by regulating starch accumulation in amyloplasts of graviperceptive cells. Required for stem circumnutation movements. Regulates lateral organ morphogenesis and gravitropic responses. Acts cooperatively with IDD16 to control silique and branche orientation. Involved in the establishment of auxin gradients through the regulation of auxin biosynthesis and transport. The sequence is that of Zinc finger protein SHOOT GRAVITROPISM 5 from Arabidopsis thaliana (Mouse-ear cress).